Consider the following 506-residue polypeptide: Maturase K (506 aa).

This sequence belongs to the intron maturase 2 family. MatK subfamily.

It localises to the plastid. The protein resides in the chloroplast. Usually encoded in the trnK tRNA gene intron. Probably assists in splicing its own and other chloroplast group II introns. The sequence is that of Maturase K from Empetrum nigrum (Black crowberry).